The primary structure comprises 205 residues: Recombination protein RecR (205 aa).

The segment at 59–74 (CAMCNTFCEGGLCDIC) adopts a C4-type zinc-finger fold. The region spanning 82–177 (RRLMVVHMPA…KVSRLSQGIP (96 aa)) is the Toprim domain.

This sequence belongs to the RecR family.

May play a role in DNA repair. It seems to be involved in an RecBC-independent recombinational process of DNA repair. It may act with RecF and RecO. The polypeptide is Recombination protein RecR (Neisseria meningitidis serogroup C (strain 053442)).